The sequence spans 45 residues: Toxin Bcs III 15.09 (45 aa).

The region spanning 2–44 is the EGF-like domain; that stretch reads QGTACTGEHAHNFCLNGGTCRHIQSLGEYYCICPEGYTGHRCE. Cystine bridges form between C6/C21, C15/C32, and C34/C43.

It is found in the secreted. It localises to the nematocyst. Has both toxic and EGF activity. In Bunodosoma caissarum (Sea anemone), this protein is Toxin Bcs III 15.09.